The primary structure comprises 172 residues: Large ribosomal subunit protein uL22y (172 aa).

The protein belongs to the universal ribosomal protein uL22 family.

This is Large ribosomal subunit protein uL22y from Hordeum vulgare (Barley).